We begin with the raw amino-acid sequence, 946 residues long: Aminopeptidase N (946 aa).

The signal sequence occupies residues 1–15 (MRLLICLTLLGLVCG). N-linked (GlcNAc...) asparagine glycosylation is present at asparagine 60. 308 to 312 (GAMEN) serves as a coordination point for substrate. Residue histidine 344 participates in Zn(2+) binding. The active-site Proton acceptor is the glutamate 345. Zn(2+) contacts are provided by histidine 348 and glutamate 367. N-linked (GlcNAc...) asparagine glycans are attached at residues asparagine 550 and asparagine 605. 2 disulfides stabilise this stretch: cysteine 715–cysteine 722 and cysteine 751–cysteine 787.

It belongs to the peptidase M1 family. Zn(2+) serves as cofactor.

The protein resides in the cell membrane. It catalyses the reaction Release of an N-terminal amino acid, Xaa-|-Yaa- from a peptide, amide or arylamide. Xaa is preferably Ala, but may be most amino acids including Pro (slow action). When a terminal hydrophobic residue is followed by a prolyl residue, the two may be released as an intact Xaa-Pro dipeptide.. The chain is Aminopeptidase N (APN1) from Plutella xylostella (Diamondback moth).